A 179-amino-acid polypeptide reads, in one-letter code: Large ribosomal subunit protein uL5 (179 aa).

Belongs to the universal ribosomal protein uL5 family. In terms of assembly, part of the 50S ribosomal subunit; part of the 5S rRNA/L5/L18/L25 subcomplex. Contacts the 5S rRNA and the P site tRNA. Forms a bridge to the 30S subunit in the 70S ribosome.

Functionally, this is one of the proteins that bind and probably mediate the attachment of the 5S RNA into the large ribosomal subunit, where it forms part of the central protuberance. In the 70S ribosome it contacts protein S13 of the 30S subunit (bridge B1b), connecting the 2 subunits; this bridge is implicated in subunit movement. Contacts the P site tRNA; the 5S rRNA and some of its associated proteins might help stabilize positioning of ribosome-bound tRNAs. The protein is Large ribosomal subunit protein uL5 of Clostridium botulinum (strain Alaska E43 / Type E3).